A 603-amino-acid polypeptide reads, in one-letter code: Elongation factor 4 (603 aa).

The 183-residue stretch at 2 to 184 folds into the tr-type G domain; that stretch reads NHIRNFSIIA…AIVHKMPAPR (183 aa). Residues 14–19 and 131–134 each bind GTP; these read DHGKST and NKMD.

This sequence belongs to the TRAFAC class translation factor GTPase superfamily. Classic translation factor GTPase family. LepA subfamily.

It localises to the cell inner membrane. The catalysed reaction is GTP + H2O = GDP + phosphate + H(+). In terms of biological role, required for accurate and efficient protein synthesis under certain stress conditions. May act as a fidelity factor of the translation reaction, by catalyzing a one-codon backward translocation of tRNAs on improperly translocated ribosomes. Back-translocation proceeds from a post-translocation (POST) complex to a pre-translocation (PRE) complex, thus giving elongation factor G a second chance to translocate the tRNAs correctly. Binds to ribosomes in a GTP-dependent manner. This Variovorax paradoxus (strain S110) protein is Elongation factor 4.